A 411-amino-acid polypeptide reads, in one-letter code: Corticotropin-releasing factor receptor 2 (411 aa).

A signal peptide (not cleaved) is located at residues 1–19 (MDAALLLSLLEANCSLALA). Over 1-108 (MDAALLLSLL…EPILDDKQRK (108 aa)) the chain is Extracellular. 5 N-linked (GlcNAc...) asparagine glycosylation sites follow: asparagine 13, asparagine 41, asparagine 74, asparagine 86, and asparagine 94. 3 cysteine pairs are disulfide-bonded: cysteine 14/cysteine 50, cysteine 40/cysteine 83, and cysteine 64/cysteine 98. A helical transmembrane segment spans residues 109–139 (YDLHYRIALIINYLGHCVSVVALVAAFLLFL). Over 140-146 (VLRSIRC) the chain is Cytoplasmic. A helical membrane pass occupies residues 147–171 (LRNVIHWNLITTFILRNITWFLLQL). Topologically, residues 172 to 185 (IDHEVHEGNEVWCR) are extracellular. Cysteine 184 and cysteine 254 are oxidised to a cystine. The chain crosses the membrane as a helical span at residues 186 to 214 (CVTTIFNYFVVTNFFWMFVEGCYLHTAIV). At 215–221 (MTYSTEH) the chain is on the cytoplasmic side. Residues 222–249 (LRKWLFLFIGWCIPCPIIVAWAVGKLYY) form a helical membrane-spanning segment. Over 250-265 (ENEQCWFGKEPGDLVD) the chain is Extracellular. A helical transmembrane segment spans residues 266–291 (YIYQGPIILVLLINFVFLFNIVRILM). At 292–302 (TKLRASTTSET) the chain is on the cytoplasmic side. The chain crosses the membrane as a helical span at residues 303-327 (IQYRKAVKATLVLLPLLGITYMLFF). Residues 328–334 (VNPGEDD) are Extracellular-facing. The chain crosses the membrane as a helical span at residues 335–364 (LSQIVFIYFNSFLQSFQGFFVSVFYCFFNG). Over 365–411 (EVRSALRKRWHRWQDHHALRVPVARAMSIPTSPTRISFHSIKQTAAV) the chain is Cytoplasmic.

This sequence belongs to the G-protein coupled receptor 2 family. In terms of assembly, monomer. Interacts (via N-terminal extracellular domain) with CRF, UCN, UCN2 and UCN3. Post-translationally, a N-glycosylation site within the signal peptide impedes its proper cleavage and function. Predominantly expressed in limbic regions of the brain such as the lateral septum, the entorhinal cortex, the hypothalamic ventromedial nucleus and several amygdaloid nuclei. Also detectable in lung, kidney and heart.

It localises to the cell membrane. Functionally, G-protein coupled receptor for CRH (corticotropin-releasing factor), UCN (urocortin), UCN2 and UCN3. Has high affinity for UCN. Ligand binding causes a conformation change that triggers signaling via guanine nucleotide-binding proteins (G proteins) and down-stream effectors, such as adenylate cyclase. Promotes the activation of adenylate cyclase, leading to increased intracellular cAMP levels. In Rattus norvegicus (Rat), this protein is Corticotropin-releasing factor receptor 2 (Crhr2).